A 297-amino-acid chain; its full sequence is Bifunctional protein FolD (297 aa).

NADP(+) is bound by residues 164-166 (GRS), Ser-193, and Val-234.

Belongs to the tetrahydrofolate dehydrogenase/cyclohydrolase family. In terms of assembly, homodimer.

It catalyses the reaction (6R)-5,10-methylene-5,6,7,8-tetrahydrofolate + NADP(+) = (6R)-5,10-methenyltetrahydrofolate + NADPH. The enzyme catalyses (6R)-5,10-methenyltetrahydrofolate + H2O = (6R)-10-formyltetrahydrofolate + H(+). It participates in one-carbon metabolism; tetrahydrofolate interconversion. In terms of biological role, catalyzes the oxidation of 5,10-methylenetetrahydrofolate to 5,10-methenyltetrahydrofolate and then the hydrolysis of 5,10-methenyltetrahydrofolate to 10-formyltetrahydrofolate. In Natronomonas pharaonis (strain ATCC 35678 / DSM 2160 / CIP 103997 / JCM 8858 / NBRC 14720 / NCIMB 2260 / Gabara) (Halobacterium pharaonis), this protein is Bifunctional protein FolD.